We begin with the raw amino-acid sequence, 60 residues long: Conotoxin Cal6.30 (60 aa).

The first 22 residues, 1 to 22 (MKVTCVLTLAVLILTIGQIANA), serve as a signal peptide directing secretion. Cystine bridges form between Cys-31–Cys-47, Cys-38–Cys-51, and Cys-46–Cys-55.

Expressed by the venom duct.

Its subcellular location is the secreted. Functionally, probable neurotoxin. This chain is Conotoxin Cal6.30, found in Californiconus californicus (California cone).